A 599-amino-acid chain; its full sequence is Protein ref(2)P (599 aa).

A PB1 domain is found at 3–88 (EKLLKITYQG…CESNMHVQVA (86 aa)). The segment at 122–173 (HDSVQCDGCGLAPLIGFRYKCVQCSNFDLCQKCESAHKHPEHLMLRMPTNNG) adopts a ZZ-type zinc-finger fold. Positions 127, 130, 142, 145, 151, 154, 160, and 163 each coordinate Zn(2+). Disordered regions lie at residues 192 to 225 (RRSR…HARR), 245 to 319 (TTAT…INLD), 357 to 453 (GIFA…LDPE), and 507 to 544 (ASAN…DDKR). The segment covering 199–211 (PFQEASQPAPAAE) has biased composition (low complexity). Basic and acidic residues predominate over residues 276 to 286 (KATESEAKPTE). The span at 291-319 (NTDQSVPTTEDPVTTPRSTEPTTPVINLD) shows a compositional bias: polar residues. A compositionally biased stretch (low complexity) spans 375 to 411 (QSQSSGQSAASSASQSAVPSAAPSANQSNVPSANQSA). 3 tandem repeats follow at residues 386-393 (SASQSAVP), 399-406 (ANQSNVPS), and 407-413 (ANQSATP). The tract at residues 386–413 (SASQSAVPSAAPSANQSNVPSANQSATP) is 3 X 8 AA repeats of S-A-N-Q-S-X-X-P. The segment covering 412 to 423 (TPSISGSISDAQ) has biased composition (polar residues). Positions 511–536 (TQTAQVDTVSTSTSTTSVTTNSVGTS) are enriched in low complexity. A UBA domain is found at 550-595 (HTDERINQSIHAMMAMGFSNEGAWLTQLLESVQGNIPAALDVMHVS).

Interacts with aPKC and Traf6.

It localises to the nucleus. The protein localises to the cytoplasm. Its function is as follows. Required for selective autophagy activation by ubiquitinated proteins. Implicated in sigma rhabdovirus multiplication and necessary for male fertility. Involved in activating transcription of Drs. This chain is Protein ref(2)P (ref(2)P), found in Drosophila simulans (Fruit fly).